The sequence spans 234 residues: MKFTPEFASGLLIQRYKRFLTDITLEDGTEVTIHCPNTGSMRNCLFPGNKVWFSVSNNPKRKYSRTWEQAQTPDGDIIGINTGRANALAEEAINAGTIVELQGYESLRREVKYGSENSRIDILLTSDAQANCYVEVKSCTLLENGQGYFPDAVTTRGQKHLRELMEMVEQGHRAVLLFVVQHTGIHSVKAAEHIDPAYAKLLSEAHATGVEVLAYSADMSPIAASLVKSCPVKL.

Belongs to the SfsA family.

The polypeptide is Sugar fermentation stimulation protein homolog (Shewanella piezotolerans (strain WP3 / JCM 13877)).